The sequence spans 91 residues: Small ribosomal subunit protein bS20 (91 aa).

Residues 1–18 (MPLHKSAEKRLRQSEKRN) are compositionally biased toward basic and acidic residues. The segment at 1–24 (MPLHKSAEKRLRQSEKRNVRNRAR) is disordered.

This sequence belongs to the bacterial ribosomal protein bS20 family.

Binds directly to 16S ribosomal RNA. The protein is Small ribosomal subunit protein bS20 of Chlorobium phaeobacteroides (strain DSM 266 / SMG 266 / 2430).